Consider the following 343-residue polypeptide: S-adenosylmethionine:tRNA ribosyltransferase-isomerase (343 aa).

It belongs to the QueA family. Monomer.

It localises to the cytoplasm. It carries out the reaction 7-aminomethyl-7-carbaguanosine(34) in tRNA + S-adenosyl-L-methionine = epoxyqueuosine(34) in tRNA + adenine + L-methionine + 2 H(+). Its pathway is tRNA modification; tRNA-queuosine biosynthesis. Transfers and isomerizes the ribose moiety from AdoMet to the 7-aminomethyl group of 7-deazaguanine (preQ1-tRNA) to give epoxyqueuosine (oQ-tRNA). The chain is S-adenosylmethionine:tRNA ribosyltransferase-isomerase from Geotalea uraniireducens (strain Rf4) (Geobacter uraniireducens).